We begin with the raw amino-acid sequence, 1153 residues long: Error-prone DNA polymerase (1153 aa).

The interval D1107 to H1153 is disordered. Residues T1116 to D1131 show a composition bias toward basic and acidic residues.

The protein belongs to the DNA polymerase type-C family. DnaE2 subfamily.

It is found in the cytoplasm. It carries out the reaction DNA(n) + a 2'-deoxyribonucleoside 5'-triphosphate = DNA(n+1) + diphosphate. DNA polymerase involved in damage-induced mutagenesis and translesion synthesis (TLS). It is not the major replicative DNA polymerase. The protein is Error-prone DNA polymerase of Rhodopseudomonas palustris (strain BisA53).